Consider the following 290-residue polypeptide: 4-hydroxy-tetrahydrodipicolinate synthase (290 aa).

Threonine 44 is a pyruvate binding site. The active-site Proton donor/acceptor is the tyrosine 132. The active-site Schiff-base intermediate with substrate is the lysine 160. Residue isoleucine 202 participates in pyruvate binding.

Belongs to the DapA family. Homotetramer; dimer of dimers.

Its subcellular location is the cytoplasm. The catalysed reaction is L-aspartate 4-semialdehyde + pyruvate = (2S,4S)-4-hydroxy-2,3,4,5-tetrahydrodipicolinate + H2O + H(+). It functions in the pathway amino-acid biosynthesis; L-lysine biosynthesis via DAP pathway; (S)-tetrahydrodipicolinate from L-aspartate: step 3/4. In terms of biological role, catalyzes the condensation of (S)-aspartate-beta-semialdehyde [(S)-ASA] and pyruvate to 4-hydroxy-tetrahydrodipicolinate (HTPA). This Legionella pneumophila (strain Corby) protein is 4-hydroxy-tetrahydrodipicolinate synthase.